The primary structure comprises 931 residues: Protein unc-45 homolog B (931 aa).

TPR repeat units lie at residues 6 to 39, 43 to 76, and 77 to 110; these read AAQL…TKDK, ATLY…NSAD, and IKAL…EPRN. ARM repeat units follow at residues 169 to 208, 211 to 250, and 751 to 790; these read EAGA…GMCS, RARA…AIID, and DKLR…NMVL.

In terms of assembly, interacts with HSP90 in an ATP-independent manner. Interacts with UBE4B; the interaction may target UNC45B for proteasomal degradation. In terms of tissue distribution, highly expressed in adult skeletal muscle and heart. Detected at intermediate levels in lung. Highly expressed in embryonic heart.

It is found in the cytoplasm. The protein resides in the myofibril. The protein localises to the sarcomere. Its subcellular location is the z line. It localises to the a band. It is found in the perinuclear region. The protein resides in the cytosol. In terms of biological role, acts as a co-chaperone for HSP90 and is required for proper folding of the myosin motor domain. Plays a role in sarcomere formation during muscle cell development. Is necessary for normal early lens development. The chain is Protein unc-45 homolog B (Unc45b) from Mus musculus (Mouse).